A 122-amino-acid chain; its full sequence is ATP synthase epsilon chain (122 aa).

It belongs to the ATPase epsilon chain family. In terms of assembly, F-type ATPases have 2 components, CF(1) - the catalytic core - and CF(0) - the membrane proton channel. CF(1) has five subunits: alpha(3), beta(3), gamma(1), delta(1), epsilon(1). CF(0) has three main subunits: a, b and c.

It is found in the cell membrane. Produces ATP from ADP in the presence of a proton gradient across the membrane. The sequence is that of ATP synthase epsilon chain from Rhodococcus jostii (strain RHA1).